The sequence spans 164 residues: R-phycoerythrin alpha chain (164 aa).

Residues Asn47, Lys81, Cys82, Arg84, His88, Arg137, Cys139, and Arg142 each coordinate (2R,3E)-phycoerythrobilin.

Belongs to the phycobiliprotein family. As to quaternary structure, heterododecamer of 6 alpha and 6 beta chains. The basic functional unit of phycobiliproteins is a ring-shaped hexamer formed from two back-to-back trimers contacting via the alpha chain subunits. The trimers are composed of alpha/beta subunit heterodimers arranged around a three-fold axis of symmetry. The phycoerythrins also contain a gamma subunit which is located in the center of the hexamer. Post-translationally, contains two covalently linked phycoerythrobilin chromophores.

Its subcellular location is the plastid. The protein resides in the chloroplast thylakoid membrane. Its function is as follows. Light-harvesting photosynthetic tetrapyrrole chromophore-protein from the phycobiliprotein complex. This is R-phycoerythrin alpha chain (cpeA) from Griffithsia monilis (Red alga).